The chain runs to 201 residues: ATP-dependent Clp protease proteolytic subunit (201 aa).

S103 functions as the Nucleophile in the catalytic mechanism. H128 is an active-site residue.

It belongs to the peptidase S14 family. Fourteen ClpP subunits assemble into 2 heptameric rings which stack back to back to give a disk-like structure with a central cavity, resembling the structure of eukaryotic proteasomes.

The protein localises to the cytoplasm. The enzyme catalyses Hydrolysis of proteins to small peptides in the presence of ATP and magnesium. alpha-casein is the usual test substrate. In the absence of ATP, only oligopeptides shorter than five residues are hydrolyzed (such as succinyl-Leu-Tyr-|-NHMec, and Leu-Tyr-Leu-|-Tyr-Trp, in which cleavage of the -Tyr-|-Leu- and -Tyr-|-Trp bonds also occurs).. Cleaves peptides in various proteins in a process that requires ATP hydrolysis. Has a chymotrypsin-like activity. Plays a major role in the degradation of misfolded proteins. The sequence is that of ATP-dependent Clp protease proteolytic subunit from Bordetella avium (strain 197N).